We begin with the raw amino-acid sequence, 330 residues long: Probable cell division protein WhiA (330 aa).

The H-T-H motif DNA-binding region spans 275–308 (SLDELGRLSDPPLTKDAIAGRIRRLLAMADRRAE).

It belongs to the WhiA family.

Involved in cell division and chromosome segregation. The protein is Probable cell division protein WhiA of Kocuria rhizophila (strain ATCC 9341 / DSM 348 / NBRC 103217 / DC2201).